Consider the following 924-residue polypeptide: Lon protease homolog 3, mitochondrial (924 aa).

Residues 1–63 (MMPKRFNTSG…PVQSLLLFRA (63 aa)) constitute a mitochondrion transit peptide. Positions 112–325 (VIALPLPHKP…LTLELVKKQV (214 aa)) constitute a Lon N-terminal domain. Residue 447–454 (GPPGVGKT) coordinates ATP. Residues 738–922 (QTPVGVVMGL…EKIFDLAFNY (185 aa)) enclose the Lon proteolytic domain. Catalysis depends on residues S828 and K871.

The protein belongs to the peptidase S16 family. In terms of assembly, homohexamer or homoheptamer. Organized in a ring with a central cavity.

Its subcellular location is the mitochondrion matrix. The enzyme catalyses Hydrolysis of proteins in presence of ATP.. Functionally, ATP-dependent serine protease that mediates the selective degradation of misfolded, unassembled or oxidatively damaged polypeptides as well as certain short-lived regulatory proteins in the mitochondrial matrix. May also have a chaperone function in the assembly of inner membrane protein complexes. Participates in the regulation of mitochondrial gene expression and in the maintenance of the integrity of the mitochondrial genome. Binds to mitochondrial DNA in a site-specific manner. The chain is Lon protease homolog 3, mitochondrial (LON3) from Arabidopsis thaliana (Mouse-ear cress).